The primary structure comprises 1567 residues: ABC multidrug transporter MDR1 (1567 aa).

Residues 1-11 (MASQPPQPPSG) show a composition bias toward pro residues. The disordered stretch occupies residues 1–37 (MASQPPQPPSGQPDTQYEEYQSEVITETTNRPTPAAD). Residues 22-32 (SEVITETTNRP) show a composition bias toward polar residues. N-linked (GlcNAc...) asparagine glycosylation is found at N149, N157, and N356. The ABC transporter 1 domain maps to 167 to 432 (VQYQDTFLSP…FEEMGWYCPP (266 aa)). 6 consecutive transmembrane segments (helical) span residues 543–563 (STIA…SLFF), 571–591 (GFFA…LMSI), 636–656 (IPIK…LGGL), 661–681 (AKFF…SAIF), 691–711 (IPQA…YTGF), and 798–818 (LGIL…VSEL). Residues N819, N895, and N912 are each glycosylated (N-linked (GlcNAc...) asparagine). Residues 891–1134 (FTWRNVTYDI…LLNYFETHGA (244 aa)) form the ABC transporter 2 domain. 927 to 934 (GVSGAGKT) contacts ATP. The segment at 1172–1202 (ESRHVQQELDRIQSETSKRNEGHGQSAEKEP) is disordered. Residues 1231–1251 (IWGKLLLGLASALFIGFSFFL) traverse the membrane as a helical segment. An N-linked (GlcNAc...) asparagine glycan is attached at N1253. 5 helical membrane-spanning segments follow: residues 1257 to 1277 (AGLQ…SSLV), 1305 to 1325 (VFLL…GIIA), 1345 to 1365 (ILLL…QMII), 1372 to 1392 (ETAG…NGVL), and 1498 to 1518 (GIGW…YYLI).

The protein belongs to the ABC transporter superfamily. ABCG family. PDR (TC 3.A.1.205) subfamily.

It is found in the cell membrane. It carries out the reaction voriconazole(in) + ATP + H2O = voriconazole(out) + ADP + phosphate + H(+). The enzyme catalyses fluconazole(in) + ATP + H2O = fluconazole(out) + ADP + phosphate + H(+). The catalysed reaction is (R)-miconazole(in) + ATP + H2O = (R)-miconazole(out) + ADP + phosphate + H(+). It catalyses the reaction (S)-miconazole(in) + ATP + H2O = (S)-miconazole(out) + ADP + phosphate + H(+). In terms of biological role, pleiotropic ABC efflux transporter that may be involved in the modulation susceptibility to a wide range of unrelated cytotoxic compounds, including ethidium bromide, ketoconazole, cycloheximide, fluconazole, griseofulvin, imazalil and itraconazole. The chain is ABC multidrug transporter MDR1 from Trichophyton interdigitale (strain MR816).